Here is a 417-residue protein sequence, read N- to C-terminus: SNF1 protein kinase subunit beta-3 (417 aa).

Residues 1 to 12 (MAGDNPENKDAS) show a composition bias toward basic and acidic residues. Positions 1 to 37 (MAGDNPENKDASMLDVSDAASNTTINGKHSADSTNEA) are disordered. Residues Ser12, Ser21, Ser44, and Ser135 each carry the phosphoserine modification. The segment covering 19–37 (AASNTTINGKHSADSTNEA) has biased composition (polar residues). Disordered stretches follow at residues 64–155 (SSLI…VEGK) and 250–269 (GNEP…DDSK). The span at 118 to 136 (TGNTLQKMDYQPSQQPDSL) shows a compositional bias: polar residues. Low complexity predominate over residues 137–149 (QNQGFQQQQEQQQ). Positions 152–342 (VEGKKGRAMM…DQQQNNHQNM (191 aa)) are kinase-interacting sequence (KIS); required for interaction with SNF1. Residues 257 to 269 (LAEKKANHVDDSK) show a composition bias toward basic and acidic residues. A phosphoserine mark is found at Ser276 and Ser279. The tract at residues 343-417 (AWLTPPQLPP…VTQILYTPLQ (75 aa)) is association with SNF1 kinase complex (ASC) domain; required for interaction with SNF4.

This sequence belongs to the 5'-AMP-activated protein kinase beta subunit family. As to quaternary structure, component of the SNF1 kinase complex, a heterotrimeric complex composed of the catalytic alpha subunit SNF1, one of the three related beta subunits SIP1, SIP2 or GAL83, and the regulatory gamma subunit SNF4. The beta subunit serves as a bridge between the catalytic and the regulatory subunit. Interacts (via KIS domain) with SNF1. Interacts (via ASC domain) with SNF4. Interacts with REE1. In terms of processing, phosphorylated by SNF1 in vitro.

The protein localises to the cytoplasm. The protein resides in the nucleus. Its function is as follows. Beta subunit of the SNF1 kinase complex, which is required for transcriptional, metabolic, and developmental adaptations in response to glucose limitation. Has a structural role, mediating heterotrimer formation, and a regulatory role, defining carbon source-regulated subcellular location and substrate specificity of the SNF1 kinase complex. Promotes the relocalization of the SNF1 kinase complex to the nucleus upon shift to nonfermentable carbon sources. This Saccharomyces cerevisiae (strain ATCC 204508 / S288c) (Baker's yeast) protein is SNF1 protein kinase subunit beta-3 (GAL83).